An 86-amino-acid polypeptide reads, in one-letter code: Large ribosomal subunit protein bL31 (86 aa).

The disordered stretch occupies residues 65-86; that stretch reads YRMASSDSSEQKDKSSEEKKES. Residues 73-86 show a composition bias toward basic and acidic residues; that stretch reads SEQKDKSSEEKKES.

The protein belongs to the bacterial ribosomal protein bL31 family. Type A subfamily. Part of the 50S ribosomal subunit.

Binds the 23S rRNA. The chain is Large ribosomal subunit protein bL31 from Prochlorococcus marinus (strain NATL1A).